A 734-amino-acid chain; its full sequence is Tripartite terminase subunit 3 (734 aa).

Residues 184 to 190 (ASKRARV) carry the Nuclear localization signal motif. A Walker A motif motif is present at residues 259 to 266 (VPRRHGKT). A Walker B motif motif is present at residues 353-358 (LLFVDE). The active-site For ATPase activity is the glutamate 358. Catalysis depends on for nuclease activity residues aspartate 511, glutamate 583, and aspartate 707.

The protein belongs to the herpesviridae TRM3 protein family. As to quaternary structure, interacts with the terminase subunits TRM1 and TRM2. Interacts with portal protein.

It is found in the host nucleus. Component of the molecular motor that translocates viral genomic DNA in empty capsid during DNA packaging. Forms a tripartite terminase complex together with TRM1 and TRM2 in the host cytoplasm. Once the complex reaches the host nucleus, it interacts with the capsid portal vertex. This portal forms a ring in which genomic DNA is translocated into the capsid. TRM3 carries an RNase H-like nuclease activity that plays an important role for the cleavage of concatemeric viral DNA into unit length genomes. The polypeptide is Tripartite terminase subunit 3 (Equus caballus (Horse)).